The primary structure comprises 32 residues: AFCKYNGEQCTSDGQCCNGRCRTAFMGKICMG.

Intrachain disulfides connect Cys3-Cys17, Cys10-Cys21, and Cys16-Cys30.

The protein belongs to the neurotoxin 17 (21C2) family. As to expression, expressed by the venom gland.

Its subcellular location is the secreted. Functionally, may act as a neurotoxin. The polypeptide is U3-ctenitoxin-Pk1a (Phoneutria keyserlingi (Brazilian wandering spider)).